Reading from the N-terminus, the 611-residue chain is MAADNTGSKSSSAADSYVGSLISLTSKSEIRYEGILYNINTDESSIGLQNVRSFGTEGRKKDGPQVPPSDKVYEYILFRGTDIKDLQVKASPPVQPPASTINNDPAIIQSHYPSPMPTSGSLPSTASGSLPDISSHNGQPGQHGMGFQNAMPLYQPGGNLGSWGASPQPPMYWQGFYTPPPNGLPQLHQQSLIRPPHGLPMPNSLQQPLQYPNFNTPPPPTGSSSLQGSSLPEAPSSLFPFSTSSQMLAPSSLPFPGLPPVTLSSSLQSTLQSAPSPSLASEMAPPLLSNKAPITAPPTLPQDTNLLSFSLSTTRATEASTGLPLSNKPSVVTGPISPPQTTPLTSAPVAGVSSSISQDKPKPLLVTPGQLLQSGSSAVSLSPPSTNADKDVEVVQVSSSAGLEQSVPVTSEAQPPILPLPSSARPTQKPNGHSFPNHNGYRGRGRGRGRGAGRSHQVMKFTEDFDFTAMNEKFNKDEVWGHLGKSTTLDGDEDDDSPTVDEAELPKIEAKPVYNKDDFFDSLSSNTIDRESQNSRPRFSEQRKLDTETFGEFSRFRGGRGGRGGYGRNNGYSRGGYGGRGYGGYGGRGGGGGGYGYGGRGQGRGVSNRTT.

One can recognise a Sm domain in the interval 9–92 (KSSSAADSYV…IKDLQVKASP (84 aa)). Disordered regions lie at residues 111 to 153 (HYPS…AMPL), 183 to 238 (GLPQ…PSSL), 264 to 301 (SSSL…PTLP), 318 to 362 (EAST…DKPK), 396 to 455 (QVSS…AGRS), and 519 to 611 (FFDS…NRTT). Polar residues-rich tracts occupy residues 117-140 (PTSG…NGQP) and 203-214 (NSLQQPLQYPNF). The span at 264–281 (SSSLQSTLQSAPSPSLAS) shows a compositional bias: low complexity. Composition is skewed to polar residues over residues 318-330 (EAST…NKPS), 396-413 (QVSS…TSEA), and 424-437 (ARPT…SFPN). The segment covering 441-453 (YRGRGRGRGRGAG) has biased composition (basic residues). A DFDF domain is found at 453–489 (GRSHQVMKFTEDFDFTAMNEKFNKDEVWGHLGKSTTL). The FFD box signature appears at 512–527 (PVYNKDDFFDSLSSNT). Residues 528–547 (IDRESQNSRPRFSEQRKLDT) are compositionally biased toward basic and acidic residues. The short motif at 534 to 554 (NSRPRFSEQRKLDTETFGEFS) is the TFG box element. Positions 559-604 (GRGGRGGYGRNNGYSRGGYGGRGYGGYGGRGGGGGGYGYGGRGQGR) are enriched in gly residues.

Belongs to the LSM14 family. As to quaternary structure, homodimer. Component of the decapping complex. Interacts with DCP1 and DCP2.

The protein resides in the cytoplasm. Its subcellular location is the P-body. As a component of the decapping complex, involved in the degradation of mRNAs. Promotes P-body formation. Translational repressor. The sequence is that of Protein decapping 5 (DCP5) from Arabidopsis thaliana (Mouse-ear cress).